Reading from the N-terminus, the 358-residue chain is MAILIKNKVPTTLYQVYDNEGKLMDPNHKITLSNEQLKHAFYLMNLSRIMDKKMLVWQRAGKMLNFAPNLGEEALQVGMGMGLNENDWFCPTFRSGALMLYRGVKPEQLLLYWNGNENGSKIEAKYKTLPINITIGAQYSHAAGLGYMLHYKKLPNVAVTMIGDGGTAEGEFYEAMNIASIHKWNSVFCINNNQFAISTRTKLESAVSDLSTKAIAVNIPRIRVDGNDLIASYEAMHEAANYARSGNGPVLIEFFSWRQGPHTTSDDPSIYRTKEEEAEAMKSDPVKRLRNFLFDRGILTPQQEEEMVAKIEQEVQAAYEVMVSKTPVTLDEVFDYNYEKLTPDLARQKAEAKKYFKD.

Heterodimer of an alpha and a beta chain. Thiamine diphosphate serves as cofactor.

It catalyses the reaction N(6)-[(R)-lipoyl]-L-lysyl-[protein] + pyruvate + H(+) = N(6)-[(R)-S(8)-acetyldihydrolipoyl]-L-lysyl-[protein] + CO2. The pyruvate dehydrogenase complex catalyzes the overall conversion of pyruvate to acetyl-CoA and CO(2). It contains multiple copies of three enzymatic components: pyruvate dehydrogenase (E1), dihydrolipoamide acetyltransferase (E2) and lipoamide dehydrogenase (E3). The chain is Pyruvate dehydrogenase E1 component subunit alpha (pdhA) from Mycoplasma pneumoniae (strain ATCC 29342 / M129 / Subtype 1) (Mycoplasmoides pneumoniae).